The chain runs to 376 residues: Homeobox protein extradenticle (376 aa).

A disordered region spans residues 16-35 (APQGYSLSGQDDGQNTGNEN). A compositionally biased stretch (polar residues) spans 20–34 (YSLSGQDDGQNTGNE). A PBC domain is found at 38 to 237 (RKQKDIGEIL…VMILRSRFLD (200 aa)). A PBC-A region spans residues 45–124 (EILQQIMSIS…EGVAGPEKGG (80 aa)). The segment at 127-237 (AAAASAAAAS…VMILRSRFLD (111 aa)) is PBC-B. The homeobox; TALE-type DNA-binding region spans 238–300 (ARRKRRNFSK…NKRIRYKKNI (63 aa)). The span at 318 to 335 (ASPYSMAGPPSGTTTPMM) shows a compositional bias: low complexity. The segment at 318–376 (ASPYSMAGPPSGTTTPMMSPAPPQDSMGYTMGSGGYDQQQPYDNSMGGYDPNLHQDLSP) is disordered.

Belongs to the TALE/PBX homeobox family. Interacts with Ubx and hth.

It is found in the nucleus. Transcription factor which acts with the selector homeodomain proteins altering the regulation of downstream target genes such as wingless (wg), teashirt (tsh) and decapentaplegic (dpp), thus affecting segmental identity. Delimits the eye field and prevent inappropriate eye development. Required for proper localization of chordotonal organs within the peripheral nervous system. This Drosophila pseudoobscura pseudoobscura (Fruit fly) protein is Homeobox protein extradenticle.